The sequence spans 120 residues: NAD(P)H-quinone oxidoreductase subunit 3 (120 aa).

The next 3 membrane-spanning stretches (helical) occupy residues 10–30, 64–84, and 89–109; these read LLVFLIVCALLPVLALGASAL, MFALVFVIFDVETVFLYPWAV, and LGLLAFVEALIFIAILVVGLV.

Belongs to the complex I subunit 3 family. In terms of assembly, NDH-1 can be composed of about 15 different subunits; different subcomplexes with different compositions have been identified which probably have different functions.

It localises to the cellular thylakoid membrane. It catalyses the reaction a plastoquinone + NADH + (n+1) H(+)(in) = a plastoquinol + NAD(+) + n H(+)(out). The catalysed reaction is a plastoquinone + NADPH + (n+1) H(+)(in) = a plastoquinol + NADP(+) + n H(+)(out). Functionally, NDH-1 shuttles electrons from an unknown electron donor, via FMN and iron-sulfur (Fe-S) centers, to quinones in the respiratory and/or the photosynthetic chain. The immediate electron acceptor for the enzyme in this species is believed to be plastoquinone. Couples the redox reaction to proton translocation, and thus conserves the redox energy in a proton gradient. Cyanobacterial NDH-1 also plays a role in inorganic carbon-concentration. The polypeptide is NAD(P)H-quinone oxidoreductase subunit 3 (Synechococcus sp. (strain JA-3-3Ab) (Cyanobacteria bacterium Yellowstone A-Prime)).